Here is a 285-residue protein sequence, read N- to C-terminus: Cytochrome P450 monooxygenase eupD (285 aa).

The signal sequence occupies residues 1–19 (MSIAGLVTTLPWLMNMLRA). C229 provides a ligand contact to heme.

Belongs to the cytochrome P450 family. Requires heme as cofactor.

Its pathway is secondary metabolite biosynthesis; terpenoid biosynthesis. Functionally, cytochrome P450 monooxygenase; part of the gene cluster that mediates the biosynthesis of eupenifeldin, a bistropolone meroterpenoid that acts as an antitumor agent. The first step of eupenifeldin biosynthesis is the biosynthesis of 3-methylorcinaldehyde performed by the non-reducing polyketide synthase eupA. Oxidative dearomatization of 3-methylorcinaldehyde likely catalyzed by the FAD-dependent monooxygenase eupB is followed by oxidative ring expansion by the 2-oxoglutarate-dependent dioxygenase eupC to provide the first tropolone metabolite, tropolone stipitaldehyde. In parallel, generation of sesquiterpene alpha-humulene from farnesylpyrophosphate (FPP) is catalyzed by the terpene cyclase eupE. The cytochrome P450 monooxygenase eupD then hydroxylates humulene to humulenol. The putative Diels-Alderase eupF probably catalyzes the formation of the tropolone-humulene skeleton by linking humulenol and the polyketide moiety. The short-chain dehydrogenase/reductase eupG and the flavin-dependent monooxygenase eupH are also essential for eupenifeldin biosynthesis and are likely the additional decorating enzymes of the tropolone-humulene skeleton to produce final eupenifeldin or derivatives. The protein is Cytochrome P450 monooxygenase eupD of Phoma sp.